The chain runs to 145 residues: Transcription antitermination protein NusB (145 aa).

This sequence belongs to the NusB family.

Its function is as follows. Involved in transcription antitermination. Required for transcription of ribosomal RNA (rRNA) genes. Binds specifically to the boxA antiterminator sequence of the ribosomal RNA (rrn) operons. The chain is Transcription antitermination protein NusB from Paraburkholderia phymatum (strain DSM 17167 / CIP 108236 / LMG 21445 / STM815) (Burkholderia phymatum).